A 178-amino-acid chain; its full sequence is Large ribosomal subunit protein uL6 (178 aa).

This sequence belongs to the universal ribosomal protein uL6 family. As to quaternary structure, part of the 50S ribosomal subunit.

In terms of biological role, this protein binds to the 23S rRNA, and is important in its secondary structure. It is located near the subunit interface in the base of the L7/L12 stalk, and near the tRNA binding site of the peptidyltransferase center. This chain is Large ribosomal subunit protein uL6, found in Exiguobacterium sibiricum (strain DSM 17290 / CCUG 55495 / CIP 109462 / JCM 13490 / 255-15).